The primary structure comprises 255 residues: Probable pyridoxal 5'-phosphate synthase subunit PDX2 (255 aa).

G46–S48 lines the L-glutamine pocket. Catalysis depends on C78, which acts as the Nucleophile. L-glutamine is bound by residues R108 and I142–R143. Residues H202 and E204 each act as charge relay system in the active site. The tract at residues G225–Q255 is disordered.

It belongs to the glutaminase PdxT/SNO family. In terms of assembly, interacts with PDX1.1 or PDX1.3, but not with PDX1.2. Binds to RPA2A. In terms of tissue distribution, strongly expressed in roots, stems, leaves and flowers.

It is found in the cytoplasm. It catalyses the reaction aldehydo-D-ribose 5-phosphate + D-glyceraldehyde 3-phosphate + L-glutamine = pyridoxal 5'-phosphate + L-glutamate + phosphate + 3 H2O + H(+). The catalysed reaction is L-glutamine + H2O = L-glutamate + NH4(+). Its pathway is cofactor biosynthesis; pyridoxal 5'-phosphate biosynthesis. Catalyzes the hydrolysis of glutamine to glutamate and ammonia as part of the biosynthesis of pyridoxal 5'-phosphate. The resulting ammonia molecule is channeled to the active site of PDX1. Involved in the indirect resistance to singlet oxygen-generating photosensitizers. In Arabidopsis thaliana (Mouse-ear cress), this protein is Probable pyridoxal 5'-phosphate synthase subunit PDX2 (PDX2).